A 510-amino-acid chain; its full sequence is Proline--tRNA ligase (510 aa).

It belongs to the class-II aminoacyl-tRNA synthetase family. ProS type 3 subfamily. As to quaternary structure, homodimer.

Its subcellular location is the cytoplasm. The enzyme catalyses tRNA(Pro) + L-proline + ATP = L-prolyl-tRNA(Pro) + AMP + diphosphate. Its function is as follows. Catalyzes the attachment of proline to tRNA(Pro) in a two-step reaction: proline is first activated by ATP to form Pro-AMP and then transferred to the acceptor end of tRNA(Pro). The sequence is that of Proline--tRNA ligase from Sphingomonas elodea.